The following is a 343-amino-acid chain: Programmed cell death protein 2 (343 aa).

8 residues coordinate Zn(2+): C134, C137, C145, C148, C154, H158, H167, and C171. Residues 134–171 (CRVCGCLAPMTCSRCKQAHYCSKEHQTLDWQLGHKQAC) form an MYND-type; atypical zinc finger.

Ubiquitinated by PRKN, promoting proteasomal degradation.

It is found in the nucleus. In terms of biological role, may be a DNA-binding protein with a regulatory function. May play an important role in cell death and/or in regulation of cell proliferation. This chain is Programmed cell death protein 2 (Pdcd2), found in Rattus norvegicus (Rat).